Reading from the N-terminus, the 312-residue chain is tRNA pseudouridine synthase B (312 aa).

The active-site Nucleophile is Asp38.

The protein belongs to the pseudouridine synthase TruB family. Type 1 subfamily.

It catalyses the reaction uridine(55) in tRNA = pseudouridine(55) in tRNA. Functionally, responsible for synthesis of pseudouridine from uracil-55 in the psi GC loop of transfer RNAs. This Syntrophus aciditrophicus (strain SB) protein is tRNA pseudouridine synthase B.